A 333-amino-acid polypeptide reads, in one-letter code: Fructose-1,6-bisphosphatase class 1 (333 aa).

Positions 90, 113, 115, and 116 each coordinate Mg(2+). Residues 116 to 119 (DGSS), Asn-209, Tyr-242, and Lys-272 contribute to the substrate site. Mg(2+) is bound at residue Glu-278.

It belongs to the FBPase class 1 family. In terms of assembly, homotetramer. It depends on Mg(2+) as a cofactor.

The protein resides in the cytoplasm. It catalyses the reaction beta-D-fructose 1,6-bisphosphate + H2O = beta-D-fructose 6-phosphate + phosphate. The protein operates within carbohydrate biosynthesis; gluconeogenesis. The sequence is that of Fructose-1,6-bisphosphatase class 1 from Pasteurella multocida (strain Pm70).